The primary structure comprises 547 residues: Chaperonin GroEL (547 aa).

ATP-binding positions include 30 to 33 (TLGP), K51, 87 to 91 (DGTTT), G415, 479 to 481 (NAA), and D495.

It belongs to the chaperonin (HSP60) family. In terms of assembly, forms a cylinder of 14 subunits composed of two heptameric rings stacked back-to-back. Interacts with the co-chaperonin GroES.

The protein resides in the cytoplasm. The enzyme catalyses ATP + H2O + a folded polypeptide = ADP + phosphate + an unfolded polypeptide.. Functionally, together with its co-chaperonin GroES, plays an essential role in assisting protein folding. The GroEL-GroES system forms a nano-cage that allows encapsulation of the non-native substrate proteins and provides a physical environment optimized to promote and accelerate protein folding. In Enterobacter sp. (strain 638), this protein is Chaperonin GroEL.